The primary structure comprises 239 residues: MKFTVISLFPAIIKPFFENSIMKKAINKGIVSFELIDVRDFSKDKHKRCDDLSYGGGAGMVLKAEPMSFALEHVEATKKTTIFLSPSGIKYTQELAYSLSKKEEIVIICGRYEGIDQRIIDLYVDFEISIGDYVLSSGEIAALVLIDSVYRLLDGVINPNSLLEESFGMKNGLLEYPHYTRPYNFMGIKVPEVLVSGHHENIKNWRLFKAREKTKKNRYDLYLKYLEIIGEDNGFDKKN.

S-adenosyl-L-methionine-binding positions include Gly-110 and Ile-130–Leu-135.

Belongs to the RNA methyltransferase TrmD family. In terms of assembly, homodimer.

Its subcellular location is the cytoplasm. It catalyses the reaction guanosine(37) in tRNA + S-adenosyl-L-methionine = N(1)-methylguanosine(37) in tRNA + S-adenosyl-L-homocysteine + H(+). Its function is as follows. Specifically methylates guanosine-37 in various tRNAs. This chain is tRNA (guanine-N(1)-)-methyltransferase, found in Borrelia garinii subsp. bavariensis (strain ATCC BAA-2496 / DSM 23469 / PBi) (Borreliella bavariensis).